Reading from the N-terminus, the 544-residue chain is MSSKLLRGTFVLTLGTYISRILGMVYLIPFSIMVGATGGALFQYGYNQYTLFLNIATMGFPAAVSKFVSKYNSKGDYETSRKMLKAGMSVMLVTGMIAFFILYLSAPMFAEISLGGKDNNGLTIDHVVYVIRMVSLALLVVPIMSLVRGFFQGHQMMGPTAVSQVVEQIVRIIFLLSATFLILKVFNGGLVIAVGYATFAALIGAFGGLVVLYIYWNKRKGSLLAMMPNTGPTANLSYKKMFFELFSYAAPYVFVGLAIPLYNYIDTNTFNKAMIEAGHQAISQDMLAILTLYVQKLVMIPVSLATAFGLTLIPTITESFTSGNYKLLNQQINQTMQTILFLIIPAVVGISLLSGPTYTFFYGSESLHPELGANILLWYSPVAILFSLFTVNAAILQGINKQKFAVVSLVIGVVIKLVLNVPLIKLMQADGAILATALGYIASLLYGFIMIKRHAGYSYKILVKRTVLMLVLSAIMGIAVKIVQWVLGFFISYQDGQMQAAIVVVIAAAVGGAVYLYCGYRLGFLQKILGRRLPGFFRKGRHAG.

Helical transmembrane passes span 21-41 (ILGM…GGAL), 49-69 (YTLF…KFVS), 90-110 (VMLV…PMFA), 127-147 (VVYV…MSLV), 169-189 (IVRI…FNGG), 191-211 (VIAV…GLVV), 241-261 (MFFE…AIPL), 297-317 (LVMI…PTIT), 338-358 (TILF…GPTY), 375-395 (ILLW…NAAI), 404-424 (FAVV…VPLI), 431-451 (GAIL…FIMI), 471-491 (VLSA…GFFI), and 500-520 (AAIV…YCGY).

The protein belongs to the polysaccharide synthase family.

The protein resides in the cell membrane. Its pathway is cell wall biogenesis; peptidoglycan biosynthesis. Functionally, involved in peptidoglycan biosynthesis. Transports lipid-linked peptidoglycan precursors from the inner to the outer leaflet of the cytoplasmic membrane. Not essential for growth. In Bacillus subtilis (strain 168), this protein is Lipid II flippase MurJ.